Here is a 426-residue protein sequence, read N- to C-terminus: Histidine--tRNA ligase (426 aa).

The protein belongs to the class-II aminoacyl-tRNA synthetase family. Homodimer.

The protein localises to the cytoplasm. It catalyses the reaction tRNA(His) + L-histidine + ATP = L-histidyl-tRNA(His) + AMP + diphosphate + H(+). The chain is Histidine--tRNA ligase from Streptococcus pyogenes serotype M28 (strain MGAS6180).